Reading from the N-terminus, the 310-residue chain is Probable RuBisCO transcriptional regulator (310 aa).

The 58-residue stretch at 6 to 63 folds into the HTH lysR-type domain; sequence FTLDQLRILKAIASEGSFKKAAESLYISQPAVSLQIQNLEKQLNIPIFDRANRKAVFT. The H-T-H motif DNA-binding region spans 23-42; that stretch reads FKKAAESLYISQPAVSLQIQ.

Belongs to the LysR transcriptional regulatory family.

It localises to the plastid. Its subcellular location is the chloroplast. In terms of biological role, trans-acting transcriptional regulator of RuBisCO genes (rbcL and rbcS) expression. This Guillardia theta (Cryptophyte) protein is Probable RuBisCO transcriptional regulator (rbcR).